The sequence spans 356 residues: S-adenosylmethionine:tRNA ribosyltransferase-isomerase (356 aa).

This sequence belongs to the QueA family. Monomer.

It is found in the cytoplasm. It carries out the reaction 7-aminomethyl-7-carbaguanosine(34) in tRNA + S-adenosyl-L-methionine = epoxyqueuosine(34) in tRNA + adenine + L-methionine + 2 H(+). It functions in the pathway tRNA modification; tRNA-queuosine biosynthesis. In terms of biological role, transfers and isomerizes the ribose moiety from AdoMet to the 7-aminomethyl group of 7-deazaguanine (preQ1-tRNA) to give epoxyqueuosine (oQ-tRNA). The sequence is that of S-adenosylmethionine:tRNA ribosyltransferase-isomerase from Xanthomonas axonopodis pv. citri (strain 306).